Here is a 234-residue protein sequence, read N- to C-terminus: Purine nucleoside phosphorylase DeoD-type (234 aa).

Histidine 4 is an a purine D-ribonucleoside binding site. Residues glycine 20, arginine 24, arginine 43, and 87–90 (RVGT) each bind phosphate. A purine D-ribonucleoside-binding positions include 179 to 181 (EME) and 203 to 204 (SN).

The protein belongs to the PNP/UDP phosphorylase family. Homohexamer; trimer of homodimers.

It carries out the reaction a purine D-ribonucleoside + phosphate = a purine nucleobase + alpha-D-ribose 1-phosphate. The enzyme catalyses a purine 2'-deoxy-D-ribonucleoside + phosphate = a purine nucleobase + 2-deoxy-alpha-D-ribose 1-phosphate. Catalyzes the reversible phosphorolytic breakdown of the N-glycosidic bond in the beta-(deoxy)ribonucleoside molecules, with the formation of the corresponding free purine bases and pentose-1-phosphate. The chain is Purine nucleoside phosphorylase DeoD-type from Latilactobacillus sakei subsp. sakei (strain 23K) (Lactobacillus sakei subsp. sakei).